The following is a 312-amino-acid chain: GDP-L-fucose synthase (312 aa).

An NADP(+)-binding site is contributed by 11–17 (GGRGMVG). The Proton donor/acceptor role is filled by Tyr136. NADP(+) contacts are provided by Lys140 and His179. Lys187, Trp202, and Arg209 together coordinate substrate.

The protein belongs to the NAD(P)-dependent epimerase/dehydratase family. Fucose synthase subfamily.

It catalyses the reaction GDP-beta-L-fucose + NADP(+) = GDP-4-dehydro-alpha-D-rhamnose + NADPH + H(+). It functions in the pathway nucleotide-sugar biosynthesis; GDP-L-fucose biosynthesis via de novo pathway; GDP-L-fucose from GDP-alpha-D-mannose: step 2/2. Catalyzes the two-step NADP-dependent conversion of GDP-4-dehydro-6-deoxy-D-mannose to GDP-fucose, involving an epimerase and a reductase reaction. The protein is GDP-L-fucose synthase of Azorhizobium caulinodans (strain ATCC 43989 / DSM 5975 / JCM 20966 / LMG 6465 / NBRC 14845 / NCIMB 13405 / ORS 571).